The primary structure comprises 428 residues: Somatostatin receptor type 3 (428 aa).

Polar residues predominate over residues 1–12; the sequence is MATVTYPSSEPT. Residues 1 to 20 form a disordered region; sequence MATVTYPSSEPTTLDPGNAS. Topologically, residues 1–45 are extracellular; the sequence is MATVTYPSSEPTTLDPGNASSTWPLDTTLGNTSAGASLTGLAVSG. N-linked (GlcNAc...) asparagine glycosylation is found at asparagine 18 and asparagine 31. Residues 46 to 71 traverse the membrane as a helical segment; the sequence is ILISLVYLVVCVVGLLGNSLVIYVVL. Residues 72-81 lie on the Cytoplasmic side of the membrane; it reads RHTSSPSVTS. A helical membrane pass occupies residues 82 to 103; that stretch reads VYILNLALADELFMLGLPFLAA. Residues 104–118 are Extracellular-facing; sequence QNALSYWPFGSLMCR. A disulfide bridge links cysteine 117 with cysteine 192. The chain crosses the membrane as a helical span at residues 119-140; sequence LVMAVDGINQFTSIFCLTVMSV. At 141–162 the chain is on the cytoplasmic side; it reads DRYLAVVHPTRSARWRTAPVAR. The helical transmembrane segment at 163-182 threads the bilayer; sequence TVSAAVWVASAVVVLPVVVF. Residues 183 to 206 lie on the Extracellular side of the membrane; that stretch reads SGVPRGMSTCHMQWPEPAAAWRTA. The helical transmembrane segment at 207-232 threads the bilayer; the sequence is FIIYTAALGFFGPLLVICLCYLLIVV. Topologically, residues 233 to 266 are cytoplasmic; that stretch reads KVRSTTRRVRAPSCQWVQAPACQRRRRSERRVTR. The helical transmembrane segment at 267–288 threads the bilayer; that stretch reads MVVAVVALFVLCWMPFYLLNIV. Residues 289 to 302 are Extracellular-facing; it reads NVVCPLPEEPAFFG. Residues 303-325 form a helical membrane-spanning segment; the sequence is LYFLVVALPYANSCANPILYGFL. Over 326-428 the chain is Cytoplasmic; that stretch reads SYRFKQGFRR…GDKASTLSHL (103 aa). A phosphoserine mark is found at serine 341, serine 346, and serine 351. Residues 344–428 are disordered; that stretch reads IRSQEPGSGP…GDKASTLSHL (85 aa). Phosphothreonine is present on threonine 357. Acidic residues predominate over residues 357–370; it reads TEEEEDEEEEERRE. The segment covering 385–412 has biased composition (polar residues); the sequence is RLSQIAQAGTSGQQPRPCTGTAKEQQLL.

Belongs to the G-protein coupled receptor 1 family. In terms of assembly, homodimer and heterodimer with SSTR2. Heterodimerization with SSTR2 inactivates SSTR3 receptor function. Phosphorylated. Phosphorylation increases upon somatostatin binding. In terms of tissue distribution, in the brain, primarily observed in the forebrain. Moderate levels found throughout laminae 2-6 of the neocortex and allocortex, and high levels in lamina 2 of the piriform and entorhinal cortices. High levels also present in the cornu ammonis fields of the hippocampus. In the amygdala, highly expressed in the nucleus of the lateral olfactory tract with expression also detected in the rostral portions of the basal magnocellular and lateral nuclei. In the diencephalon, moderate levels observed in the ventromedial and arcuate nuclei of the hypothalamus. In the midbrain, moderate levels found in the lateral portion of the substantia nigra pars reticulata.

The protein resides in the cell membrane. In terms of biological role, receptor for somatostatin-14 and -28. This receptor is coupled via pertussis toxin sensitive G proteins to inhibition of adenylyl cyclase. The protein is Somatostatin receptor type 3 (Sstr3) of Mus musculus (Mouse).